The sequence spans 328 residues: Cytochrome c biogenesis protein CcsA (328 aa).

8 consecutive transmembrane segments (helical) span residues 13-33 (ISFS…LVNL), 46-66 (GIVI…IYSG), 73-93 (LYES…VSYF), 101-121 (LNAI…SGLL), 146-166 (MILG…LLVI), 234-254 (IISL…VWAN), 263-283 (WDPK…YLHI), and 295-315 (AIVA…VNLL).

Belongs to the CcmF/CycK/Ccl1/NrfE/CcsA family. As to quaternary structure, may interact with Ccs1.

The protein resides in the plastid. It is found in the chloroplast thylakoid membrane. Required during biogenesis of c-type cytochromes (cytochrome c6 and cytochrome f) at the step of heme attachment. In Barbarea verna (Land cress), this protein is Cytochrome c biogenesis protein CcsA.